Consider the following 460-residue polypeptide: Elongation factor 1-alpha (460 aa).

At G2 the chain carries N,N,N-trimethylglycine. K3 carries the post-translational modification N6,N6-dimethyllysine; alternate. The residue at position 3 (K3) is an N6-methyllysine; alternate. Residues 6-241 (KTHINVVVIG…DAIEPPKRPT (236 aa)) enclose the tr-type G domain. Residues 15 to 22 (GHVDSGKS) are G1. 15 to 22 (GHVDSGKS) provides a ligand contact to GTP. K31 is modified (N6-methyllysine). The tract at residues 71 to 75 (GITID) is G2. An N6,N6,N6-trimethyllysine modification is found at K80. Residues 92 to 95 (DAPG) form a G3 region. GTP-binding positions include 92–96 (DAPGH) and 154–157 (NKMD). Residues 154-157 (NKMD) form a G4 region. Residues 193–195 (SGF) form a G5 region. K317 carries the N6,N6-dimethyllysine; alternate modification. The residue at position 317 (K317) is an N6-methyllysine; alternate. Position 391 is an N6-methyllysine (K391).

Belongs to the TRAFAC class translation factor GTPase superfamily. Classic translation factor GTPase family. EF-Tu/EF-1A subfamily.

Its subcellular location is the cytoplasm. Functionally, this protein promotes the GTP-dependent binding of aminoacyl-tRNA to the A-site of ribosomes during protein biosynthesis. This chain is Elongation factor 1-alpha (tef-1), found in Neurospora crassa (strain ATCC 24698 / 74-OR23-1A / CBS 708.71 / DSM 1257 / FGSC 987).